A 315-amino-acid polypeptide reads, in one-letter code: MQRRSRGINTGLILLLSQIFHVGINNIPPVTLATLALNIWFFLNPQKPLYSSCLSVEKCYQQKDWQRLLLSPLHHADDWHLYFNMASMLWKGINLERRLGSRWFAYVITAFSVLTGVVYLLLQFAVAEFMDEPDFKRSCAVGFSGVLFALKVLNNHYCPGGFVNILGFPVPNRFACWVELVAIHLFSPGTSFAGHLAGILVGLMYTQGPLKKIMEACAGGFSSSVGYPGRQYYFNSSGSSGYQDYYPHGRPDHYEEAPRNYDTYTAGLSEEEQLERALQASLWDRGNTRNSPPPYGFHLSPEEMRRQRLHRFDSQ.

The Cytoplasmic segment spans residues 1 to 21 (MQRRSRGINTGLILLLSQIFH). A helical transmembrane segment spans residues 22 to 42 (VGINNIPPVTLATLALNIWFF). Residues 43-106 (LNPQKPLYSS…RRLGSRWFAY (64 aa)) are Extracellular-facing. The chain crosses the membrane as a helical span at residues 107-127 (VITAFSVLTGVVYLLLQFAVA). The Cytoplasmic segment spans residues 128-138 (EFMDEPDFKRS). The chain crosses the membrane as a helical span at residues 139 to 157 (CAVGFSGVLFALKVLNNHY). Serine 144 serves as the catalytic Nucleophile. At 158 to 180 (CPGGFVNILGFPVPNRFACWVEL) the chain is on the extracellular side. Residues 181-201 (VAIHLFSPGTSFAGHLAGILV) form a helical membrane-spanning segment. Histidine 195 is an active-site residue. The Cytoplasmic portion of the chain corresponds to 202–315 (GLMYTQGPLK…RQRLHRFDSQ (114 aa)). The interval 269–284 (SEEEQLERALQASLWD) is ubiquitin-binding domain (UBD). The interval 283–315 (WDRGNTRNSPPPYGFHLSPEEMRRQRLHRFDSQ) is disordered. The span at 300-315 (SPEEMRRQRLHRFDSQ) shows a compositional bias: basic and acidic residues. Residues 301–315 (PEEMRRQRLHRFDSQ) form a VCP/p97-interacting motif (VIM) region.

It belongs to the peptidase S54 family. Interacts (via C-terminal domain) with VCP. Interacts with ubiquitin and ubiquitinated proteins. Interacts with BIK and STEAP3. Expressed strongly in testis.

It localises to the endoplasmic reticulum membrane. It is found in the mitochondrion membrane. It catalyses the reaction Cleaves type-1 transmembrane domains using a catalytic dyad composed of serine and histidine that are contributed by different transmembrane domains.. Its activity is regulated as follows. Inhibited by aprotinin. Intramembrane-cleaving serine protease that cleaves single transmembrane or multi-pass membrane proteins in the hydrophobic plane of the membrane, luminal loops and juxtamembrane regions. Involved in regulated intramembrane proteolysis and the subsequent release of functional polypeptides from their membrane anchors. Functional component of endoplasmic reticulum-associated degradation (ERAD) for misfolded membrane proteins. Required for the degradation process of some specific misfolded endoplasmic reticulum (ER) luminal proteins. Participates in the transfer of misfolded proteins from the ER to the cytosol, where they are destroyed by the proteasome in a ubiquitin-dependent manner. Functions in BIK, MPZ, PKD1, PTCRA, RHO, STEAP3 and TRAC processing. Involved in the regulation of exosomal secretion; inhibits the TSAP6-mediated secretion pathway. Involved in the regulation of apoptosis; modulates BIK-mediated apoptotic activity. Also plays a role in the regulation of spermatogenesis; inhibits apoptotic activity in spermatogonia. The protein is Rhomboid-related protein 4 (RHBDD1) of Homo sapiens (Human).